Here is a 214-residue protein sequence, read N- to C-terminus: Alpha-S1-casein (214 aa).

The signal sequence occupies residues 1-15; sequence MKLLILTCLVAVALA. Phosphoserine is present on residues serine 63, serine 79, serine 81, serine 82, serine 83, and serine 90. 2 consecutive repeats follow at residues 85–99 and 125–140; these read EIVP…IQKE and EIVP…SMKE.

This sequence belongs to the alpha-casein family. Mammary gland specific. Secreted in milk.

The protein resides in the secreted. Functionally, important role in the capacity of milk to transport calcium phosphate. The protein is Alpha-S1-casein (CSN1S1) of Bubalus bubalis (Domestic water buffalo).